We begin with the raw amino-acid sequence, 338 residues long: Large ribosomal subunit protein uL10 (338 aa).

Residues 292-338 (LDDDLKERVSSTASAVEAKEEEAPKEEKEEEKEEEEEAPAAGLGMLF) are disordered. Residues 308-318 (EAKEEEAPKEE) are compositionally biased toward basic and acidic residues. Positions 319-329 (KEEEKEEEEEA) are enriched in acidic residues.

The protein belongs to the universal ribosomal protein uL10 family. Part of the 50S ribosomal subunit. Forms part of the ribosomal stalk which helps the ribosome interact with GTP-bound translation factors. Forms a heptameric L10(L12)2(L12)2(L12)2 complex, where L10 forms an elongated spine to which the L12 dimers bind in a sequential fashion.

Forms part of the ribosomal stalk, playing a central role in the interaction of the ribosome with GTP-bound translation factors. This chain is Large ribosomal subunit protein uL10, found in Methanococcus aeolicus (strain ATCC BAA-1280 / DSM 17508 / OCM 812 / Nankai-3).